Here is a 123-residue protein sequence, read N- to C-terminus: Putative membrane protein insertion efficiency factor (123 aa).

It belongs to the UPF0161 family.

The protein resides in the cell inner membrane. In terms of biological role, could be involved in insertion of integral membrane proteins into the membrane. In Beijerinckia indica subsp. indica (strain ATCC 9039 / DSM 1715 / NCIMB 8712), this protein is Putative membrane protein insertion efficiency factor.